The following is a 463-amino-acid chain: Stress-activated protein kinase jnk-1 (463 aa).

Polar residues predominate over residues 1–12; the sequence is MEERLSTTSSYP. Positions 1–23 are disordered; it reads MEERLSTTSSYPSHPGRSVEEDH. The Protein kinase domain occupies 119–412; that stretch reads YQNLRLIGSG…ISVDDALRHP (294 aa). ATP contacts are provided by residues 126-131 and lysine 148; that span reads GSGAQG. Aspartate 244 functions as the Proton acceptor in the catalytic mechanism. A Phosphothreonine modification is found at threonine 276. The short motif at 276–278 is the TXY element; sequence TPY. Tyrosine 278 is subject to Phosphotyrosine.

It belongs to the protein kinase superfamily. CMGC Ser/Thr protein kinase family. MAP kinase subfamily. Binds to the scaffolding protein, unc-16. Unc-16 also binds other components of the JNK signaling pathway. Interacts with daf-16. Requires Mg(2+) as cofactor. Post-translationally, dually phosphorylated on Thr-276 and Tyr-278, which activates the enzyme. In terms of tissue distribution, expressed in most neurons, including nerve ring, head ganglions, dorsal and ventral nerve cords and tail ganglions. The Thr-276/Tyr-278 phosphorylated form is present in the nerve ring upon heat exposure.

Its subcellular location is the cytoplasm. It is found in the perikaryon. The protein localises to the cell projection. The protein resides in the axon. The catalysed reaction is L-seryl-[protein] + ATP = O-phospho-L-seryl-[protein] + ADP + H(+). It carries out the reaction L-threonyl-[protein] + ATP = O-phospho-L-threonyl-[protein] + ADP + H(+). Activated by threonine and tyrosine phosphorylation by either of the dual specificity kinases, jkk-1 and mek-1. In terms of biological role, serine/threonine-protein kinase which responds to activation by environmental stress by phosphorylating a number of transcription factors such as daf-16, and thus regulates transcriptional activity. By phosphorylating daf-16, plays a role in daf-16 nuclear translocation in intestinal cells in response to environmental stresses such as heat and oxidative stresses. Downstream of jkk-1, may coordinate locomotion via type-D GABAergic motoneurons and regulates synaptic vesicle transport in conjunction with unc-16. Independently of jkk-1, may regulate some mechanosensory responses, such as response to touch. Independently of jkk-1 and downstream of mek-1, plays a role in resistance to heavy metals, such as Cu(2+) or Cd(2+). Regulates germline cell apoptosis in response to heavy metals such as Cu(2+) and arsenite. Required for dopaminergic CEP neuron degeneration in response to Mn(2+). Required for normal sleep bout quantity and arousal thresholds during the transition from the last larval stage to adulthood in well-fed animals. Downstream of jkk-1 but independently of mek-1, positively regulates lifespan. The sequence is that of Stress-activated protein kinase jnk-1 (jnk-1) from Caenorhabditis elegans.